The chain runs to 301 residues: UDP-N-acetylenolpyruvoylglucosamine reductase (301 aa).

The FAD-binding PCMH-type domain maps to lysine 29–glycine 195. Residue arginine 174 is part of the active site. Serine 224 functions as the Proton donor in the catalytic mechanism. The active site involves glutamate 294.

This sequence belongs to the MurB family. FAD is required as a cofactor.

Its subcellular location is the cytoplasm. The catalysed reaction is UDP-N-acetyl-alpha-D-muramate + NADP(+) = UDP-N-acetyl-3-O-(1-carboxyvinyl)-alpha-D-glucosamine + NADPH + H(+). Its pathway is cell wall biogenesis; peptidoglycan biosynthesis. In terms of biological role, cell wall formation. The sequence is that of UDP-N-acetylenolpyruvoylglucosamine reductase from Halalkalibacterium halodurans (strain ATCC BAA-125 / DSM 18197 / FERM 7344 / JCM 9153 / C-125) (Bacillus halodurans).